The primary structure comprises 504 residues: Maturase K (504 aa).

It belongs to the intron maturase 2 family. MatK subfamily.

Its subcellular location is the plastid. The protein localises to the chloroplast. In terms of biological role, usually encoded in the trnK tRNA gene intron. Probably assists in splicing its own and other chloroplast group II introns. This is Maturase K from Vauquelinia californica (Arizona rosewood).